Consider the following 129-residue polypeptide: Histone H2A-IV (129 aa).

It belongs to the histone H2A family. As to quaternary structure, the nucleosome is a histone octamer containing two molecules each of H2A, H2B, H3 and H4 assembled in one H3-H4 heterotetramer and two H2A-H2B heterodimers. The octamer wraps approximately 147 bp of DNA.

The protein localises to the nucleus. The protein resides in the chromosome. Its function is as follows. Core component of nucleosome. Nucleosomes wrap and compact DNA into chromatin, limiting DNA accessibility to the cellular machineries which require DNA as a template. Histones thereby play a central role in transcription regulation, DNA repair, DNA replication and chromosomal stability. DNA accessibility is regulated via a complex set of post-translational modifications of histones, also called histone code, and nucleosome remodeling. The chain is Histone H2A-IV from Volvox carteri (Green alga).